The following is a 341-amino-acid chain: Ketol-acid reductoisomerase (NADP(+)) (341 aa).

Residues V2–T181 enclose the KARI N-terminal Rossmann domain. NADP(+)-binding positions include Y25–Q28, R48, S52, and D82–Q85. The active site involves H107. G133 lines the NADP(+) pocket. Residues T182 to V327 enclose the KARI C-terminal knotted domain. D190, E194, E226, and E230 together coordinate Mg(2+). S251 contributes to the substrate binding site.

This sequence belongs to the ketol-acid reductoisomerase family. Mg(2+) serves as cofactor.

The enzyme catalyses (2R)-2,3-dihydroxy-3-methylbutanoate + NADP(+) = (2S)-2-acetolactate + NADPH + H(+). The catalysed reaction is (2R,3R)-2,3-dihydroxy-3-methylpentanoate + NADP(+) = (S)-2-ethyl-2-hydroxy-3-oxobutanoate + NADPH + H(+). It participates in amino-acid biosynthesis; L-isoleucine biosynthesis; L-isoleucine from 2-oxobutanoate: step 2/4. Its pathway is amino-acid biosynthesis; L-valine biosynthesis; L-valine from pyruvate: step 2/4. In terms of biological role, involved in the biosynthesis of branched-chain amino acids (BCAA). Catalyzes an alkyl-migration followed by a ketol-acid reduction of (S)-2-acetolactate (S2AL) to yield (R)-2,3-dihydroxy-isovalerate. In the isomerase reaction, S2AL is rearranged via a Mg-dependent methyl migration to produce 3-hydroxy-3-methyl-2-ketobutyrate (HMKB). In the reductase reaction, this 2-ketoacid undergoes a metal-dependent reduction by NADPH to yield (R)-2,3-dihydroxy-isovalerate. This is Ketol-acid reductoisomerase (NADP(+)) from Anoxybacillus flavithermus (strain DSM 21510 / WK1).